A 142-amino-acid polypeptide reads, in one-letter code: Large ribosomal subunit protein uL13 (142 aa).

The protein belongs to the universal ribosomal protein uL13 family. In terms of assembly, part of the 50S ribosomal subunit.

In terms of biological role, this protein is one of the early assembly proteins of the 50S ribosomal subunit, although it is not seen to bind rRNA by itself. It is important during the early stages of 50S assembly. This chain is Large ribosomal subunit protein uL13, found in Francisella philomiragia subsp. philomiragia (strain ATCC 25017 / CCUG 19701 / FSC 153 / O#319-036).